The chain runs to 692 residues: Transforming growth factor beta activator LRRC33 (692 aa).

The first 24 residues, 1–24 (MEFLPLWLCLGFHFLIVEWRSGRG), serve as a signal peptide directing secretion. The Extracellular segment spans residues 25–650 (TATAASQGGC…CKWGQVDTGL (626 aa)). The LRRNT domain maps to 29 to 56 (ASQGGCKVVDRVADCRSLNLASVPSGLP). LRR repeat units lie at residues 58-79 (HSRM…SLQA), 82-103 (RLED…AFHE), 106-127 (HLQN…SATA), 133-155 (RLRR…MLQN), 158-179 (SLEV…VFEG), 182-203 (RLVE…AFDG), 206-227 (ELRR…SLTQ), 228-239 (LRFLNVSYNILE), 251-272 (ELEI…PQCG), and 273-294 (KLHT…YNTS). N-linked (GlcNAc...) asparagine glycosylation is present at Asn-74. Asn-155 carries an N-linked (GlcNAc...) asparagine glycan. N-linked (GlcNAc...) asparagine glycosylation occurs at Asn-232. Residues Asn-292, Asn-309, and Asn-312 are each glycosylated (N-linked (GlcNAc...) asparagine). 11 LRR repeats span residues 329-350 (ALRF…FLKK), 353-374 (SLSH…EHEP), 377-398 (ALTE…PGLT), 403-424 (NLRV…LFHS), 427-448 (SITT…VPLD), 463-484 (SLRS…PFQG), 486-507 (SLTH…SPLS), 512-533 (TLQV…MDFS), 537-558 (NLRE…KGSS), 559-580 (ALQT…VVSE), and 585-605 (GLQT…EGWG). An N-linked (GlcNAc...) asparagine glycan is attached at Asn-408. Asn-500 carries N-linked (GlcNAc...) asparagine glycosylation. The region spanning 606–643 (ALQHFKTIADLSMVTCNLSSKIIRVVELPEGIPQDCKW) is the LRRCT domain. The N-linked (GlcNAc...) asparagine glycan is linked to Asn-622. Residues 651–671 (FYLVLILPSCLTLLVASTVIF) form a helical membrane-spanning segment. Residues 672-692 (LTFKKPLLQVIKSRCHWSSIY) lie on the Cytoplasmic side of the membrane.

This sequence belongs to the LRRC32/LRRC33 family. Interacts (via LRR repeats) with TLR2, TLR3, TLR4, TLR9 and probably other Toll-like receptors. Interacts with CYBB/NOX2; the interaction is direct. Interacts with TGFB1; associates via disulfide bonds with the Latency-associated peptide chain (LAP) regulatory chain of TGFB1, leading to regulate activation of TGF-beta-1.

It localises to the cell membrane. The protein localises to the endoplasmic reticulum membrane. In terms of biological role, key regulator of transforming growth factor beta-1 (TGFB1) specifically required for microglia function in the nervous system. Required for activation of latent TGF-beta-1 in macrophages and microglia: associates specifically via disulfide bonds with the Latency-associated peptide (LAP), which is the regulatory chain of TGFB1, and regulates integrin-dependent activation of TGF-beta-1. TGF-beta-1 activation mediated by LRRC33/NRROS is highly localized: there is little spreading of TGF-beta-1 activated from one microglial cell to neighboring microglia, suggesting the existence of localized and selective activation of TGF-beta-1 by LRRC33/NRROS. Indirectly plays a role in Toll-like receptor (TLR) signaling: ability to inhibit TLR-mediated NF-kappa-B activation and cytokine production is probably a consequence of its role in TGF-beta-1 signaling. The polypeptide is Transforming growth factor beta activator LRRC33 (Rattus norvegicus (Rat)).